The sequence spans 265 residues: Eukaryotic translation initiation factor 3 subunit J (265 aa).

Residues 1-71 are disordered; sequence MSWDDEAING…KESSADRALL (71 aa). Residues 23–32 are compositionally biased toward acidic residues; the sequence is WDAEIGDDEP. The segment covering 42-71 has biased composition (basic and acidic residues); the sequence is EEKKPAPKPKKEQPKKVKKGKESSADRALL. S65 is subject to Phosphoserine. Position 75 is a phosphothreonine (T75). Position 92 is a phosphoserine (S92). The disordered stretch occupies residues 219–265; it reads VRGGTATGGAGKKKVKGKTNLGGAFKKDQDFDLDGPDDFEFGDDDFM. Omega-N-methylarginine is present on R220. A compositionally biased stretch (acidic residues) spans 249-265; that stretch reads FDLDGPDDFEFGDDDFM.

This sequence belongs to the eIF-3 subunit J family. Probable component of the eukaryotic translation initiation factor 3 (eIF-3) complex. Is not part of the eIF-3 core complex, with which it is associated in substochiometric amounts.

It is found in the cytoplasm. Its function is as follows. Component of the eukaryotic translation initiation factor 3 (eIF-3) complex, which is involved in protein synthesis of a specialized repertoire of mRNAs and, together with other initiation factors, stimulates binding of mRNA and methionyl-tRNAi to the 40S ribosome. The eIF-3 complex specifically targets and initiates translation of a subset of mRNAs involved in cell proliferation. In Saccharomyces cerevisiae (strain ATCC 204508 / S288c) (Baker's yeast), this protein is Eukaryotic translation initiation factor 3 subunit J.